The sequence spans 667 residues: Probable potassium transport system protein Kup (667 aa).

The next 12 helical transmembrane spans lie at 16-36 (GFII…LYTM), 58-78 (VSLI…LIAL), 101-121 (WLII…ALTP), 146-166 (TNVI…QRFG), 167-187 (TGVI…VLGI), 221-241 (IFIL…YSDL), 253-273 (WPFV…WILA), 294-314 (VYLV…LISG), 343-363 (LYIP…VLYF), 373-393 (YGLA…YYLI), 399-419 (PLLA…FFLA), and 431-451 (VVVL…GTVI).

The protein belongs to the HAK/KUP transporter (TC 2.A.72) family.

Its subcellular location is the cell membrane. The enzyme catalyses K(+)(in) + H(+)(in) = K(+)(out) + H(+)(out). Its function is as follows. Transport of potassium into the cell. Likely operates as a K(+):H(+) symporter. This is Probable potassium transport system protein Kup from Streptococcus equi subsp. zooepidemicus (strain H70).